The following is a 542-amino-acid chain: CTP synthase (542 aa).

Residues 1–265 (MARYIFITGG…DSEVLCAFGI (265 aa)) are amidoligase domain. S13 lines the CTP pocket. Position 13 (S13) interacts with UTP. An ATP-binding site is contributed by 14–19 (SLGKGI). Y54 contributes to the L-glutamine binding site. An ATP-binding site is contributed by D71. Positions 71 and 139 each coordinate Mg(2+). CTP contacts are provided by residues 146 to 148 (DIE), 186 to 191 (KTKPTQ), and K222. Residues 186 to 191 (KTKPTQ) and K222 each bind UTP. The region spanning 291 to 541 (TIAVVGKYTG…IEATVEQSRL (251 aa)) is the Glutamine amidotransferase type-1 domain. A353 serves as a coordination point for L-glutamine. C380 (nucleophile; for glutamine hydrolysis) is an active-site residue. Residues 381-384 (FGMQ), E404, and R469 contribute to the L-glutamine site. Catalysis depends on residues H514 and E516.

Belongs to the CTP synthase family. Homotetramer.

The enzyme catalyses UTP + L-glutamine + ATP + H2O = CTP + L-glutamate + ADP + phosphate + 2 H(+). It carries out the reaction L-glutamine + H2O = L-glutamate + NH4(+). The catalysed reaction is UTP + NH4(+) + ATP = CTP + ADP + phosphate + 2 H(+). It functions in the pathway pyrimidine metabolism; CTP biosynthesis via de novo pathway; CTP from UDP: step 2/2. Its activity is regulated as follows. Allosterically activated by GTP, when glutamine is the substrate; GTP has no effect on the reaction when ammonia is the substrate. The allosteric effector GTP functions by stabilizing the protein conformation that binds the tetrahedral intermediate(s) formed during glutamine hydrolysis. Inhibited by the product CTP, via allosteric rather than competitive inhibition. In terms of biological role, catalyzes the ATP-dependent amination of UTP to CTP with either L-glutamine or ammonia as the source of nitrogen. Regulates intracellular CTP levels through interactions with the four ribonucleotide triphosphates. The protein is CTP synthase of Bartonella quintana (strain Toulouse) (Rochalimaea quintana).